A 504-amino-acid polypeptide reads, in one-letter code: Subtilisin-like protease 1 (504 aa).

Residues 1 to 19 (MGVFRFISISLAAVSAANA) form the signal peptide. Positions 20 to 116 (AQILSMPHAQ…VEPDTIVSVH (97 aa)) are excised as a propeptide. The Inhibitor I9 domain occupies 34–116 (SYIVMMKDDT…VEPDTIVSVH (83 aa)). Positions 126–400 (SWGLARISNP…NVLINNGGAK (275 aa)) constitute a Peptidase S8 domain. Active-site charge relay system residues include Asp-158 and His-190. The segment at 172–198 (AIWGSNQVNDGDDRDGSGHGTHTSGTM) is disordered. Residues Asn-233 and Asn-251 are each glycosylated (N-linked (GlcNAc...) asparagine). Positions 282-294 (NDNQDAQSSSPAS) are enriched in polar residues. A disordered region spans residues 282–312 (NDNQDAQSSSPASEPSVCTVGSSAEDDSRSS). Ser-345 functions as the Charge relay system in the catalytic mechanism. Polar residues predominate over residues 378 to 394 (TSSITDAGPGTPTNVLI). The segment at 378–483 (TSSITDAGPG…YPGGDNFDFD (106 aa)) is disordered. 2 stretches are compositionally biased toward pro residues: residues 405 to 449 (NPNP…PGQP) and 457 to 473 (APAPAPMPPTPQHPHTP).

It belongs to the peptidase S8 family.

The protein localises to the secreted. Its function is as follows. Secreted subtilisin-like serine protease with keratinolytic activity that contributes to pathogenicity. This Trichophyton rubrum (Athlete's foot fungus) protein is Subtilisin-like protease 1 (SUB1).